Here is a 956-residue protein sequence, read N- to C-terminus: MEVTCLLLLALIPFHCRGQGVYAPAQAQIVHAGQACVVKEDNISERVYTIRESDTLVLQCLVTGHPRPQVRWTKTAGSASDKFQETSVFNETLRIERIARTQGGRYYCKAENGVGVPAIKSIRVDVQYLDEPVLTVHQTVSDVRGNFYQEKTVFLRCTVSSNPPARFIWKRGSDTLSHSQDNGVDIYEPLYTQGETKVLKLKNLRPQDYASYTCQVSVRNVCGIPDKSITFQLTNTTAPPTLKLSVNETLVVNPGENVTVQCLLTGGDPLPQLHWSHGPGPLPLGALAQGGTLSIPSVQARDSGYYNCTATNNVGNPAKKTVNLLVRSLKNATFQITPDMIKESENIQLGQDLKLSCHVDAVPQEKVNYQWFKNGKPARTSKRLLVTRNDPELPAVTSSLELIDLHFSDYGTYLCVASFPGSPVPDLSVEVNISSETVPPTISVPKGRAVVTVREGSPAELQCEVRGKPRPPVLWSRVDKEAALLPSGLALEETPDGKLRVERVSREMSGTYRCQTARYNGFNVRAREAQVQLTVHFPPEVEPSSQDVRQALGRPVLLRCSLLRGSPQRIASAVWRFKGQLLPPPPVLPAAAAEGPDHAELRLDALTRDSSGNYECSVSNDVGSATCLFQVSAKAYSPEFYFDTPNPTRSHKLSKNYSYVLQWTQREPDAVDPVLNYRLSIRQLNQHNAMVKAIPVRRVEKGQLLEYTLTDLRVPHSYEIHLTPYTTFGAGDMASRVIHYTEPINSPSLSDNTCHFEDEKICGYTQDLTDNFDWTRQNALTQNPKRSPNTGPPTDISGTPEGYYMFIETSRPRELGDRARLVSPLYNASAKFYCVSFFYHMYGKHIGSLNLLVRSRNKGTLDTHAWSLSGNKGNVWQQAHVPINPSGPFQIIFEGVRGSGYLGDIAIDDVTLKKGECPRRQMDPNKVVVMPGSGAPRLSSLQLWGSMTIFLLALQR.

The first 18 residues, 1–18 (MEVTCLLLLALIPFHCRG), serve as a signal peptide directing secretion. 2 Ig-like domains span residues 24–123 (PAQA…KSIR) and 132–230 (PVLT…KSIT). The N-linked (GlcNAc...) asparagine glycan is linked to asparagine 42. 2 disulfides stabilise this stretch: cysteine 60–cysteine 108 and cysteine 157–cysteine 214. 3 N-linked (GlcNAc...) asparagine glycosylation sites follow: asparagine 235, asparagine 257, and asparagine 307. Ig-like domains are found at residues 240 to 323 (PTLK…KTVN), 338 to 432 (PDMI…VEVN), 440 to 534 (PTIS…VQLT), and 539 to 632 (PEVE…FQVS). Intrachain disulfides connect cysteine 262–cysteine 308, cysteine 357–cysteine 415, cysteine 463–cysteine 514, and cysteine 560–cysteine 616. The region spanning 644–744 (TPNPTRSHKL…SRVIHYTEPI (101 aa)) is the Fibronectin type-III domain. One can recognise an MAM domain in the interval 752–919 (NTCHFEDEKI…VTLKKGECPR (168 aa)). The segment covering 780–789 (LTQNPKRSPN) has biased composition (polar residues). The disordered stretch occupies residues 780 to 799 (LTQNPKRSPNTGPPTDISGT). The GPI-anchor amidated serine moiety is linked to residue serine 933. The propeptide at 934 to 956 (GAPRLSSLQLWGSMTIFLLALQR) is removed in mature form.

Interacts heterophilically through its MAM domain with proteins in axon-rich regions and through its Ig-like domains with proteins in differentiating muscle. Interacts (through the Ig-like domains) with NLGN2. In terms of tissue distribution, high levels detected in developing central and peripheral nervous systems with little expression elsewhere. In brain, highest levels in cerebral cortex and hindbrain at E15. At postnatal day 1, highest levels in basilar pons and superficial layers of the neocortex. In the developing spinal cord, restricted to a subpopulation of neurons in the dorsal and spinal ventral cord, probably D1 interneurons. Expressed in brain.

The protein resides in the cell membrane. In terms of biological role, required for radial migration of cortical neurons in the superficial layer of the neocortex. Plays a role in the formation or maintenance of inhibitory synapses. May function by inhibiting the activity of NLGN2. This chain is MAM domain-containing glycosylphosphatidylinositol anchor protein 1 (Mdga1), found in Rattus norvegicus (Rat).